A 20-amino-acid chain; its full sequence is SNSLFEEVRPIVNGMDCKLG.

One can recognise a Gla domain in the interval 1–10 (SNSLFEEVRP). 4-carboxyglutamate occurs at positions 6 and 7. The region spanning 11 to 20 (IVNGMDCKLG) is the Peptidase S1 domain.

The protein belongs to the peptidase S1 family. Snake venom subfamily. In terms of assembly, heterodimer of a light chain and a heavy chain; disulfide-linked. Gamma-carboxyglutamate residues are formed by vitamin K dependent carboxylation. These residues are essential for the binding of calcium. Expressed by the venom gland.

The protein localises to the secreted. It catalyses the reaction Selective cleavage of Arg-|-Thr and then Arg-|-Ile bonds in prothrombin to form thrombin.. Its function is as follows. Snake prothrombin activator that attacks the hemostatic system of prey. This protein is functionally similar to blood coagulation factor Xa. The protein is Venom prothrombin activator notanarin-D of Notechis scutatus niger (Peninsula tiger snake).